The chain runs to 122 residues: Flagellar hook-basal body complex protein FliE (122 aa).

This sequence belongs to the FliE family.

It localises to the bacterial flagellum basal body. This Marinobacter nauticus (strain ATCC 700491 / DSM 11845 / VT8) (Marinobacter aquaeolei) protein is Flagellar hook-basal body complex protein FliE.